The primary structure comprises 480 residues: Membrane-bound lytic murein transglycosylase F (480 aa).

The signal sequence occupies residues M1–A15. The interval S16 to V259 is non-LT domain. An LT domain region spans residues K260 to Q480. Residue E304 is part of the active site.

It in the N-terminal section; belongs to the bacterial solute-binding protein 3 family. The protein in the C-terminal section; belongs to the transglycosylase Slt family.

It localises to the cell outer membrane. The catalysed reaction is Exolytic cleavage of the (1-&gt;4)-beta-glycosidic linkage between N-acetylmuramic acid (MurNAc) and N-acetylglucosamine (GlcNAc) residues in peptidoglycan, from either the reducing or the non-reducing ends of the peptidoglycan chains, with concomitant formation of a 1,6-anhydrobond in the MurNAc residue.. Its function is as follows. Murein-degrading enzyme that degrades murein glycan strands and insoluble, high-molecular weight murein sacculi, with the concomitant formation of a 1,6-anhydromuramoyl product. Lytic transglycosylases (LTs) play an integral role in the metabolism of the peptidoglycan (PG) sacculus. Their lytic action creates space within the PG sacculus to allow for its expansion as well as for the insertion of various structures such as secretion systems and flagella. The chain is Membrane-bound lytic murein transglycosylase F from Shewanella sediminis (strain HAW-EB3).